A 177-amino-acid chain; its full sequence is Probable DNA-directed RNA polymerase subunit delta (177 aa).

An HTH HARE-type domain is found at 14–81 (CSMIEVVHSV…GENRWGLRSW (68 aa)). The tract at residues 90-177 (EILPQPKPKK…ETEEEEEEEL (88 aa)) is disordered. Residues 106 to 177 (DGFDDYIEED…ETEEEEEEEL (72 aa)) show a composition bias toward acidic residues.

Belongs to the RpoE family. RNAP is composed of a core of 2 alpha, a beta and a beta' subunits. The core is associated with a delta subunit and one of several sigma factors.

Functionally, participates in both the initiation and recycling phases of transcription. In the presence of the delta subunit, RNAP displays an increased specificity of transcription, a decreased affinity for nucleic acids, and an increased efficiency of RNA synthesis because of enhanced recycling. In Bacillus cereus (strain B4264), this protein is Probable DNA-directed RNA polymerase subunit delta.